The primary structure comprises 314 residues: Ribosomal protein uL3 glutamine methyltransferase (314 aa).

This sequence belongs to the protein N5-glutamine methyltransferase family. PrmB subfamily.

It catalyses the reaction L-glutaminyl-[ribosomal protein uL3] + S-adenosyl-L-methionine = N(5)-methyl-L-glutaminyl-[ribosomal protein uL3] + S-adenosyl-L-homocysteine + H(+). Functionally, methylates large ribosomal subunit protein uL3 on a specific glutamine residue. This is Ribosomal protein uL3 glutamine methyltransferase from Shewanella oneidensis (strain ATCC 700550 / JCM 31522 / CIP 106686 / LMG 19005 / NCIMB 14063 / MR-1).